Here is a 281-residue protein sequence, read N- to C-terminus: N-acetylmuramic acid 6-phosphate etherase (281 aa).

Residues 63 to 226 enclose the SIS domain; the sequence is IVPRMKQGGR…TTSVMIQLGR (164 aa). Glutamate 91 (proton donor) is an active-site residue. Residue glutamate 122 is part of the active site.

This sequence belongs to the GCKR-like family. MurNAc-6-P etherase subfamily. Homodimer.

The enzyme catalyses N-acetyl-D-muramate 6-phosphate + H2O = N-acetyl-D-glucosamine 6-phosphate + (R)-lactate. Its pathway is amino-sugar metabolism; N-acetylmuramate degradation. Its function is as follows. Specifically catalyzes the cleavage of the D-lactyl ether substituent of MurNAc 6-phosphate, producing GlcNAc 6-phosphate and D-lactate. This is N-acetylmuramic acid 6-phosphate etherase from Bacteroides fragilis (strain YCH46).